The primary structure comprises 184 residues: Endoribonuclease YbeY (184 aa).

His-118, His-122, and His-128 together coordinate Zn(2+).

The protein belongs to the endoribonuclease YbeY family. Zn(2+) serves as cofactor.

It is found in the cytoplasm. Functionally, single strand-specific metallo-endoribonuclease involved in late-stage 70S ribosome quality control and in maturation of the 3' terminus of the 16S rRNA. In Nocardia farcinica (strain IFM 10152), this protein is Endoribonuclease YbeY.